The chain runs to 615 residues: MTTLDSNNNTGGVITYIGSSGSSPSRTSPESLYSDSSNGSFQSLTQGCPTYFPPSPTGSLTQDPARSFGTVPPSLSDDSSPSSASSSSSSSSSSFYNGSPPGSLQVAMEDSSRVSPSKGTSNITKLNGMVLLCKVCGDVASGFHYGVHACEGCKGFFRRSIQQNIQYKRCLKNENCSIVRINRNRCQQCRFKKCLSVGMSRDAVRFGRIPKREKQRMLAEMQNAMNLANNQLSSLCPLETSPAPHPTSGSVGPSPPPAPAPTPLVGFSQFPQQLTPPRSPSPEPTVEDVISQVARAHREIFTYAHDKLGTSPGNFNANHASGSPPATTPQCWESQGCPSTPNDNNLLAAQRHNEALNGLRQGPSSYPPTWPSGPAHHSCHQPNSNGHRLCPTHVYSAPEGKAPANGLRQGNTKNVLLACPMNMYPHGRSGRTVQEIWEDFSMSFTPAVREVVEFAKHIPGFRDLSQHDQVTLLKAGTFEVLMVRFASLFNVKDQTVMFLSRTTYSLQELGAMGMGDLLNAMFDFSEKLNSLALTEEELGLFTAVVLVSADRSGMENSASVEQLQKTLLRALRALVLKNRPSETSRFTKLLLKLPDLRTLNNMHSEKLLSFRVDAQ.

The span at 1 to 12 shows a compositional bias: polar residues; sequence MTTLDSNNNTGG. Positions 1 to 70 are required for phosphorylation by CSNK1E and cytoplasmic localization; sequence MTTLDSNNNT…TQDPARSFGT (70 aa). Positions 1-120 are disordered; the sequence is MTTLDSNNNT…SSRVSPSKGT (120 aa). A modulating region spans residues 1 to 129; it reads MTTLDSNNNT…TSNITKLNGM (129 aa). A compositionally biased stretch (low complexity) spans 14–34; the sequence is ITYIGSSGSSPSRTSPESLYS. Positions 35-48 are enriched in polar residues; it reads DSSNGSFQSLTQGC. Residues 49-285 are crucial for activation of GJA1; sequence PTYFPPSPTG…PPRSPSPEPT (237 aa). A phosphoserine; by GSK3-beta mark is found at serine 55 and serine 59. A compositionally biased stretch (low complexity) spans 72-103; the sequence is PPSLSDDSSPSSASSSSSSSSSSFYNGSPPGS. The segment at residues 130-206 is a DNA-binding region (nuclear receptor); the sequence is VLLCKVCGDV…VGMSRDAVRF (77 aa). 2 NR C4-type zinc fingers span residues 133 to 153 and 170 to 194; these read CKVC…CEGC and CLKN…FKKC. Residues lysine 192 and lysine 193 each carry the N6-acetyllysine; by KAT5 modification. 3 disordered regions span residues 235–287, 312–337, and 357–385; these read LCPL…PTVE, PGNF…SQGC, and NGLR…PNSN. Over residues 253-262 the composition is skewed to pro residues; that stretch reads PSPPPAPAPT. A Phosphothreonine; by CDK1 modification is found at threonine 275. The NR LBD domain maps to 285–615; sequence TVEDVISQVA…KLLSFRVDAQ (331 aa). N6-acetyllysine is present on lysine 401. Cysteine 419 is a heme binding site. N6-acetyllysine is present on lysine 592. Heme is bound at residue histidine 603.

This sequence belongs to the nuclear hormone receptor family. NR1 subfamily. Binds DNA as a monomer or a homodimer. Interacts with C1D, NR2E3, SP1 and ZNHIT1. Interacts with OPHN1 (via C-terminus). Interacts with PER2; the interaction associates PER2 to BMAL1 promoter region. Interacts with CRY1. Interacts with CCAR2. Interacts with SIAH2. Interacts with FBXW7 and CDK1. Interacts with HUWE1. Interacts with NR0B2. Interacts with NFIL3. Interacts (via domain NR LBD) with HSP90AA1 and HSP90AB1. In terms of processing, ubiquitinated, leading to its proteasomal degradation. Ubiquitinated by the SCF(FBXW7) complex when phosphorylated by CDK1 leading to its proteasomal degradation. Ubiquitinated by SIAH2; leading to its proteasomal degradation. Rapidly ubiquitinated in response to inflammatory triggers and sumoylation is a prerequisite to its ubiquitination. Sumoylated by UBE2I, desumoylated by SENP1, and sumoylation is a prerequisite to its ubiquitination. Post-translationally, phosphorylated by CSNK1E; phosphorylation enhances its cytoplasmic localization. In terms of processing, undergoes lysosome-mediated degradation in a time-dependent manner in the liver.

It localises to the nucleus. The protein localises to the cytoplasm. Its subcellular location is the cell projection. It is found in the dendrite. The protein resides in the dendritic spine. Transcriptional repressor which coordinates circadian rhythm and metabolic pathways in a heme-dependent manner. Integral component of the complex transcription machinery that governs circadian rhythmicity and forms a critical negative limb of the circadian clock by directly repressing the expression of core clock components BMAL1, CLOCK and CRY1. Also regulates genes involved in metabolic functions, including lipid and bile acid metabolism, adipogenesis, gluconeogenesis and the macrophage inflammatory response. Acts as a receptor for heme which stimulates its interaction with the NCOR1/HDAC3 corepressor complex, enhancing transcriptional repression. Recognizes two classes of DNA response elements within the promoter of its target genes and can bind to DNA as either monomers or homodimers, depending on the nature of the response element. Binds as a monomer to a response element composed of the consensus half-site motif 5'-[A/G]GGTCA-3' preceded by an A/T-rich 5' sequence (RevRE), or as a homodimer to a direct repeat of the core motif spaced by two nucleotides (RevDR-2). Acts as a potent competitive repressor of ROR alpha (RORA) function and regulates the levels of its ligand heme by repressing the expression of PPARGC1A, a potent inducer of heme synthesis. Regulates lipid metabolism by repressing the expression of APOC3 and by influencing the activity of sterol response element binding proteins (SREBPs); represses INSIG2 which interferes with the proteolytic activation of SREBPs which in turn govern the rhythmic expression of enzymes with key functions in sterol and fatty acid synthesis. Regulates gluconeogenesis via repression of G6PC1 and PEPCK and adipocyte differentiation via repression of PPARG. Regulates glucagon release in pancreatic alpha-cells via the AMPK-NAMPT-SIRT1 pathway and the proliferation, glucose-induced insulin secretion and expression of key lipogenic genes in pancreatic-beta cells. Positively regulates bile acid synthesis by increasing hepatic expression of CYP7A1 via repression of NR0B2 and NFIL3 which are negative regulators of CYP7A1. Modulates skeletal muscle oxidative capacity by regulating mitochondrial biogenesis and autophagy; controls mitochondrial biogenesis and respiration by interfering with the STK11-PRKAA1/2-SIRT1-PPARGC1A signaling pathway. Represses the expression of SERPINE1/PAI1, an important modulator of cardiovascular disease and the expression of inflammatory cytokines and chemokines in macrophages. Represses gene expression at a distance in macrophages by inhibiting the transcription of enhancer-derived RNAs (eRNAs). Plays a role in the circadian regulation of body temperature and negatively regulates thermogenic transcriptional programs in brown adipose tissue (BAT); imposes a circadian oscillation in BAT activity, increasing body temperature when awake and depressing thermogenesis during sleep. In concert with NR2E3, regulates transcriptional networks critical for photoreceptor development and function. In addition to its activity as a repressor, can also act as a transcriptional activator. In the ovarian granulosa cells acts as a transcriptional activator of STAR which plays a role in steroid biosynthesis. In collaboration with SP1, activates GJA1 transcription in a heme-independent manner. Represses the transcription of CYP2B10, CYP4A10 and CYP4A14. Represses the transcription of CES2. Represses and regulates the circadian expression of TSHB in a NCOR1-dependent manner. Negatively regulates the protein stability of NR3C1 and influences the time-dependent subcellular distribution of NR3C1, thereby affecting its transcriptional regulatory activity. Plays a critical role in the circadian control of neutrophilic inflammation in the lung; under resting, non-stress conditions, acts as a rhythmic repressor to limit inflammatory activity whereas in the presence of inflammatory triggers undergoes ubiquitin-mediated degradation thereby relieving inhibition of the inflammatory response. Plays a key role in the circadian regulation of microglial activation and neuroinflammation; suppresses microglial activation through the NF-kappaB pathway in the central nervous system. Plays a role in the regulation of the diurnal rhythms of lipid and protein metabolism in the skeletal muscle via transcriptional repression of genes controlling lipid and amino acid metabolism in the muscle. In Rattus norvegicus (Rat), this protein is Nuclear receptor subfamily 1 group D member 1 (Nr1d1).